Here is a 717-residue protein sequence, read N- to C-terminus: Ubinuclein-2 (717 aa).

3 disordered regions span residues lysine 114 to serine 136, leucine 166 to serine 308, and alanine 620 to serine 717. Acidic residues predominate over residues aspartate 118–serine 136. Composition is skewed to polar residues over residues glutamine 214–aspartate 246 and serine 285–serine 308. Residues serine 623 to glutamate 632 show a composition bias toward basic and acidic residues. The Nuclear localization signal signature appears at leucine 634–serine 641. Positions lysine 653–alanine 665 are enriched in basic and acidic residues. Basic residues predominate over residues arginine 675–alanine 705. Positions lysine 706–serine 717 are enriched in polar residues.

It belongs to the ubinuclein family. As to quaternary structure, component of the HIRA complex made of UBN1, UBN2, ASF1A, CABIN1 and HIRA. Interacts with HIRA.

It is found in the nucleus. The protein resides in the nucleolus. May be required for replication-independent chromatin assembly. This is Ubinuclein-2 from Arabidopsis thaliana (Mouse-ear cress).